The following is a 210-amino-acid chain: MKKFLIAPSILSADFARLGEDTANVLAAGGDVVHFDVMDNHYVPNLTIGPMVCEALRNYGITAPIDVHLMVKPVDRIVPDFAKAGASYISFHPEASEHVDRTIQLIKEHGCKAGLVFNPATPLSYLDYVMDKIDVILLMSVNPGFGGQSFIHGTLDKLRQVRKLIDDSGRDIRLEVDGGVKVDNIAEIAAAGADMFVAGSAIFGQPDYRK.

Ser-9 is a substrate binding site. A divalent metal cation-binding residues include His-34, Asp-36, and His-68. Asp-36 functions as the Proton acceptor in the catalytic mechanism. Residues His-68, 144–147 (GFGG), 177–179 (DGG), and 199–200 (GS) each bind substrate. Asp-177 is an a divalent metal cation binding site. Catalysis depends on Asp-177, which acts as the Proton donor.

The protein belongs to the ribulose-phosphate 3-epimerase family. Requires a divalent metal cation as cofactor.

The enzyme catalyses D-ribulose 5-phosphate = D-xylulose 5-phosphate. The protein operates within carbohydrate degradation. Its function is as follows. Catalyzes the reversible epimerization of D-ribulose 5-phosphate to D-xylulose 5-phosphate. The chain is Ribulose-phosphate 3-epimerase from Serratia marcescens.